The chain runs to 102 residues: Small ribosomal subunit protein uS10 (102 aa).

The protein belongs to the universal ribosomal protein uS10 family. Part of the 30S ribosomal subunit.

In terms of biological role, involved in the binding of tRNA to the ribosomes. The protein is Small ribosomal subunit protein uS10 of Bifidobacterium animalis subsp. lactis (strain AD011).